The following is a 290-amino-acid chain: Ig delta chain C region membrane-bound form (290 aa).

Residues 5 to 105 (PDMFLLSECK…WDSQSSKRVT (101 aa)) form the Ig-like 1 domain. An intrachain disulfide couples Cys26 to Cys78. Residues Asn58 and Asn75 are each glycosylated (N-linked (GlcNAc...) asparagine). The interval 89–111 (PFKFPESWDSQSSKRVTPTLQAK) is disordered. Positions 96-111 (WDSQSSKRVTPTLQAK) are enriched in polar residues. N-linked (GlcNAc...) asparagine glycans are attached at residues Asn112, Asn135, and Asn227. The Ig-like 2 domain occupies 133–233 (PSNLTVNILT…TKLNASKSLA (101 aa)). The helical transmembrane segment at 262–279 (GLWPTMCTFVALFLLTLL) threads the bilayer. Topologically, residues 280–290 (YSGFVTFIKVK) are cytoplasmic.

Cell lines producing IgD contain several mRNA species for Ig delta chains. In plasmacytomas, the secreted form is the major component, and the membrane-bound form is a minor component. In spleen, however, the membrane-bound form is the major component. These two forms differ in their C-terminal segments.

Its subcellular location is the cell membrane. This chain is Ig delta chain C region membrane-bound form, found in Mus musculus (Mouse).